The following is a 294-amino-acid chain: ATP synthase gamma chain (294 aa).

Belongs to the ATPase gamma chain family. In terms of assembly, F-type ATPases have 2 components, CF(1) - the catalytic core - and CF(0) - the membrane proton channel. CF(1) has five subunits: alpha(3), beta(3), gamma(1), delta(1), epsilon(1). CF(0) has three main subunits: a, b and c.

Its subcellular location is the cell inner membrane. Its function is as follows. Produces ATP from ADP in the presence of a proton gradient across the membrane. The gamma chain is believed to be important in regulating ATPase activity and the flow of protons through the CF(0) complex. The polypeptide is ATP synthase gamma chain (Rhizobium johnstonii (strain DSM 114642 / LMG 32736 / 3841) (Rhizobium leguminosarum bv. viciae)).